The following is a 300-amino-acid chain: Acetylglutamate kinase (300 aa).

Residues 69 to 70 (GG), arginine 91, and asparagine 197 each bind substrate.

It belongs to the acetylglutamate kinase family. ArgB subfamily.

The protein localises to the cytoplasm. The catalysed reaction is N-acetyl-L-glutamate + ATP = N-acetyl-L-glutamyl 5-phosphate + ADP. It participates in amino-acid biosynthesis; L-arginine biosynthesis; N(2)-acetyl-L-ornithine from L-glutamate: step 2/4. In terms of biological role, catalyzes the ATP-dependent phosphorylation of N-acetyl-L-glutamate. This chain is Acetylglutamate kinase, found in Kineococcus radiotolerans (strain ATCC BAA-149 / DSM 14245 / SRS30216).